The following is a 459-amino-acid chain: Putrescine aminotransferase (459 aa).

Residues G150–T151 and Q274 each bind pyridoxal 5'-phosphate. K300 is modified (N6-(pyridoxal phosphate)lysine). Residue T332 participates in pyridoxal 5'-phosphate binding.

The protein belongs to the class-III pyridoxal-phosphate-dependent aminotransferase family. Putrescine aminotransferase subfamily. The cofactor is pyridoxal 5'-phosphate.

The catalysed reaction is an alkane-alpha,omega-diamine + 2-oxoglutarate = an omega-aminoaldehyde + L-glutamate. It catalyses the reaction putrescine + 2-oxoglutarate = 1-pyrroline + L-glutamate + H2O. It carries out the reaction cadaverine + 2-oxoglutarate = 5-aminopentanal + L-glutamate. It functions in the pathway amine and polyamine degradation; putrescine degradation; 4-aminobutanal from putrescine (transaminase route): step 1/1. Catalyzes the aminotransferase reaction from putrescine to 2-oxoglutarate, leading to glutamate and 4-aminobutanal, which spontaneously cyclizes to form 1-pyrroline. This is the first step in one of two pathways for putrescine degradation, where putrescine is converted into 4-aminobutanoate (gamma-aminobutyrate or GABA) via 4-aminobutanal. Also functions as a cadaverine transaminase in a a L-lysine degradation pathway to succinate that proceeds via cadaverine, glutarate and L-2-hydroxyglutarate. The protein is Putrescine aminotransferase of Escherichia coli (strain K12 / MC4100 / BW2952).